Reading from the N-terminus, the 363-residue chain is Adenosine deaminase (363 aa).

Positions 42 and 44 each coordinate Zn(2+). Residues 44–46 (HLD), D172, and G201 each bind a purine D-ribonucleoside. Positions 170 to 184 (IGDTGHRAADIKASA) are gating helix loop; regulates binding affinity for substrates and thus substrate selectivity. H226 serves as a coordination point for Zn(2+). Residues E229, H253, and D310 each coordinate a purine D-ribonucleoside. Position 310 (D310) interacts with Zn(2+).

The protein belongs to the metallo-dependent hydrolases superfamily. Adenosine and AMP deaminases family. Requires Zn(2+) as cofactor.

The catalysed reaction is adenosine + H2O + H(+) = inosine + NH4(+). The enzyme catalyses S-methyl-5'-thioadenosine + H2O + H(+) = S-methyl-5'-thioinosine + NH4(+). Its pathway is purine metabolism; purine nucleoside salvage. Its activity is regulated as follows. Inhibited by coformycin and methylthiocoformycin (MT-coformycin). Catalyzes the hydrolytic deamination of adenosine to produce inosine. Unlike mammalian adenosine deaminases, also catalyzes the deamination of 5'-methylthioadenosine (MTA), a by-product of polyamine biosynthesis, to produce 5'-methylthioinosine (MTI). Plays an essential role in the purine salvage pathway which allows the parasite to use host cell purines for the synthesis of nucleic acids. This is Adenosine deaminase from Plasmodium knowlesi.